A 112-amino-acid chain; its full sequence is UPF0102 protein CFF8240_0294 (112 aa).

The protein belongs to the UPF0102 family.

This chain is UPF0102 protein CFF8240_0294, found in Campylobacter fetus subsp. fetus (strain 82-40).